Reading from the N-terminus, the 371-residue chain is MNKLPHETRVVIGMSGGVDSSVAALLLKEQGYDVIGIFMKNWDDTDENGVCTATEDYNDVIEVCNQIGIPYYAVNFEKQYWDKVFTYFLDEYRAGRTPNPDVMCNKEIKFKAFLEHAMALGADYVATGHYARVAYMDGEYKMLRGVDDNKDQTYFLNQLGQEQLSKTMFPLGELKKPQIREMAKEAGLATATKKDSTGICFIGERNFKDFLSNYLPAQPGVMQTLSGEVKGKHDGLMYYTIGQRHGLGIGGNGDPWFVVGKNLKENILYVDQGFHNELLYGDEVIATNVNWVSDRAKEKEFKCTAKFRYRQEDNGVTVQIVDENTIRILCDEPIRAITPGQAVVFYDGDECLGGATIDEVYRSGEQLDYLG.

Residues 13-20 (GMSGGVDS) and Met-39 contribute to the ATP site. The interaction with target base in tRNA stretch occupies residues 99–101 (NPD). Catalysis depends on Cys-104, which acts as the Nucleophile. Residues Cys-104 and Cys-200 are joined by a disulfide bond. Gly-128 is an ATP binding site. Residues 150–152 (KDQ) are interaction with tRNA. Residue Cys-200 is the Cysteine persulfide intermediate of the active site. The interval 308-309 (RY) is interaction with tRNA.

The protein belongs to the MnmA/TRMU family.

It is found in the cytoplasm. The catalysed reaction is S-sulfanyl-L-cysteinyl-[protein] + uridine(34) in tRNA + AH2 + ATP = 2-thiouridine(34) in tRNA + L-cysteinyl-[protein] + A + AMP + diphosphate + H(+). Catalyzes the 2-thiolation of uridine at the wobble position (U34) of tRNA, leading to the formation of s(2)U34. In Bacillus cytotoxicus (strain DSM 22905 / CIP 110041 / 391-98 / NVH 391-98), this protein is tRNA-specific 2-thiouridylase MnmA.